The chain runs to 307 residues: Acyl transferase (307 aa).

Active-site charge relay system residues include Ser116, Asp213, and His243.

The protein belongs to the LuxD family.

Its pathway is lipid metabolism; fatty acid reduction for biolumincescence. Functionally, acyl transferase is part of the fatty acid reductase system required for aldehyde biosynthesis; it produces fatty acids for the luminescent reaction. This is Acyl transferase from Aliivibrio fischeri (strain ATCC 700601 / ES114) (Vibrio fischeri).